The primary structure comprises 260 residues: Pectate lyase H (260 aa).

The first 17 residues, 1–17, serve as a signal peptide directing secretion; sequence MFIKNGLLLSLATSVLA.

The protein belongs to the polysaccharide lyase 3 family. The cofactor is Ca(2+).

The protein localises to the secreted. The catalysed reaction is Eliminative cleavage of (1-&gt;4)-alpha-D-galacturonan to give oligosaccharides with 4-deoxy-alpha-D-galact-4-enuronosyl groups at their non-reducing ends.. Functionally, pectinolytic enzyme consist of four classes of enzymes: pectin lyase, polygalacturonase, pectin methylesterase and rhamnogalacturonase. Among pectinolytic enzymes, pectin lyase is the most important in depolymerization of pectin, since it cleaves internal glycosidic bonds of highly methylated pectins. Favors pectate, the anion, over pectin, the methyl ester. The polypeptide is Pectate lyase H (plyH) (Emericella nidulans (strain FGSC A4 / ATCC 38163 / CBS 112.46 / NRRL 194 / M139) (Aspergillus nidulans)).